A 51-amino-acid chain; its full sequence is Large ribosomal subunit protein bL33 (51 aa).

The protein belongs to the bacterial ribosomal protein bL33 family.

The protein is Large ribosomal subunit protein bL33 of Nitrosospira multiformis (strain ATCC 25196 / NCIMB 11849 / C 71).